The primary structure comprises 342 residues: Ribosomal RNA small subunit methyltransferase H (342 aa).

S-adenosyl-L-methionine is bound by residues 36–38 (GGH), D56, F82, D100, and Q107. A disordered region spans residues 309-342 (ENRESGMGKGHGAAASRFPTPDSRFPTSPNGDAP). Positions 333-342 (FPTSPNGDAP) are enriched in polar residues.

Belongs to the methyltransferase superfamily. RsmH family.

Its subcellular location is the cytoplasm. It carries out the reaction cytidine(1402) in 16S rRNA + S-adenosyl-L-methionine = N(4)-methylcytidine(1402) in 16S rRNA + S-adenosyl-L-homocysteine + H(+). Specifically methylates the N4 position of cytidine in position 1402 (C1402) of 16S rRNA. The chain is Ribosomal RNA small subunit methyltransferase H from Xanthomonas campestris pv. campestris (strain B100).